A 180-amino-acid polypeptide reads, in one-letter code: MNPAPNLILIGPMGAGKTCIGRRLAERFTLDFVDVDQAIVDAAGASIPTIFEHSGEAGFRSHEREALARVLEGRGQLVSTGGGAVLDPGNRALIAQRGFVVYLRVSVNAQLERLARDKGRPLLQRPDREQVLHDLAAHRDPLYRELADITLDTDPYTAADATAHLVVKLATQWQRQDLTP.

14–19 (GAGKTC) contacts ATP. Thr-18 is a Mg(2+) binding site. Substrate is bound by residues Asp-36, Arg-60, and Gly-82. Arg-120 is a binding site for ATP. Arg-139 is a binding site for substrate.

Belongs to the shikimate kinase family. Monomer. The cofactor is Mg(2+).

It is found in the cytoplasm. It catalyses the reaction shikimate + ATP = 3-phosphoshikimate + ADP + H(+). It participates in metabolic intermediate biosynthesis; chorismate biosynthesis; chorismate from D-erythrose 4-phosphate and phosphoenolpyruvate: step 5/7. In terms of biological role, catalyzes the specific phosphorylation of the 3-hydroxyl group of shikimic acid using ATP as a cosubstrate. The sequence is that of Shikimate kinase from Stenotrophomonas maltophilia (strain K279a).